The sequence spans 1023 residues: Exportin-T (1023 aa).

It belongs to the exportin family.

It localises to the nucleus. The protein resides in the cytoplasm. In terms of biological role, tRNA nucleus export receptor which facilitates tRNA translocation across the nuclear pore complex. Involved in pre-tRNA splicing, probably by affecting the interaction of pre-tRNA with splicing endonuclease. This is Exportin-T (los1) from Botryotinia fuckeliana (strain B05.10) (Noble rot fungus).